Reading from the N-terminus, the 311-residue chain is Putative dihydroorotate dehydrogenase A (fumarate) (311 aa).

Residues K45, 69 to 73 (NSMGL), and N128 each bind substrate. FMN is bound at residue 45–46 (KT). N128 provides a ligand contact to FMN. The active-site Nucleophile is C131. The FMN site is built by K165 and V193. 194-195 (NS) contacts substrate. FMN contacts are provided by residues G220, 248–249 (GG), and 270–271 (GT).

The protein belongs to the dihydroorotate dehydrogenase family. Type 1 subfamily. Homodimer. FMN is required as a cofactor.

It is found in the cytoplasm. The catalysed reaction is (S)-dihydroorotate + fumarate = orotate + succinate. It participates in pyrimidine metabolism; UMP biosynthesis via de novo pathway. Functionally, catalyzes the conversion of dihydroorotate to orotate with fumarate as the electron acceptor. This is Putative dihydroorotate dehydrogenase A (fumarate) (pyrD) from Streptococcus pyogenes serotype M5 (strain Manfredo).